Here is a 217-residue protein sequence, read N- to C-terminus: Trimethylamine corrinoid protein 2 (217 aa).

In terms of domain architecture, B12-binding N-terminal spans Met1 to Thr92. One can recognise a B12-binding domain in the interval Leu94–Ser217. His107 is a binding site for methylcob(III)alamin.

The protein belongs to the methylamine corrinoid protein family. Can form a complex with MttB.

Its pathway is one-carbon metabolism; methanogenesis from trimethylamine. Its function is as follows. Acts probably as a methyl group carrier between MttB and either MtbA or MtaA. This Methanosarcina acetivorans (strain ATCC 35395 / DSM 2834 / JCM 12185 / C2A) protein is Trimethylamine corrinoid protein 2 (mttC2).